The primary structure comprises 177 residues: Coatomer subunit zeta-1 (177 aa).

Methionine 1 is modified (N-acetylmethionine).

Belongs to the adaptor complexes small subunit family. As to quaternary structure, oligomeric complex that consists of at least the alpha, beta, beta', gamma, delta, epsilon and zeta subunits.

It localises to the cytoplasm. The protein localises to the golgi apparatus membrane. Its subcellular location is the cytoplasmic vesicle. It is found in the COPI-coated vesicle membrane. Its function is as follows. The coatomer is a cytosolic protein complex that binds to dilysine motifs and reversibly associates with Golgi non-clathrin-coated vesicles, which further mediate biosynthetic protein transport from the ER, via the Golgi up to the trans Golgi network. Coatomer complex is required for budding from Golgi membranes, and is essential for the retrograde Golgi-to-ER transport of dilysine-tagged proteins. The zeta subunit may be involved in regulating the coat assembly and, hence, the rate of biosynthetic protein transport due to its association-dissociation properties with the coatomer complex. This Bos taurus (Bovine) protein is Coatomer subunit zeta-1 (COPZ1).